The following is a 258-amino-acid chain: Global transcriptional regulator CodY (258 aa).

The GAF domain stretch occupies residues 1-156 (MSTLLSKTRR…SATIVGMELL (156 aa)). Positions 204 to 223 (ASKIADKVGITRSVIVNALR) form a DNA-binding region, H-T-H motif.

It belongs to the CodY family.

It is found in the cytoplasm. In terms of biological role, DNA-binding global transcriptional regulator which is involved in the adaptive response to starvation and acts by directly or indirectly controlling the expression of numerous genes in response to nutrient availability. During rapid exponential growth, CodY is highly active and represses genes whose products allow adaptation to nutrient depletion. This Clostridium perfringens (strain SM101 / Type A) protein is Global transcriptional regulator CodY.